Consider the following 332-residue polypeptide: 4-hydroxy-3-methylbut-2-enyl diphosphate reductase (332 aa).

Cys-13 contacts [4Fe-4S] cluster. (2E)-4-hydroxy-3-methylbut-2-enyl diphosphate-binding residues include His-41 and His-75. Dimethylallyl diphosphate contacts are provided by His-41 and His-75. Isopentenyl diphosphate-binding residues include His-41 and His-75. Cys-97 is a binding site for [4Fe-4S] cluster. His-125 serves as a coordination point for (2E)-4-hydroxy-3-methylbut-2-enyl diphosphate. His-125 lines the dimethylallyl diphosphate pocket. Isopentenyl diphosphate is bound at residue His-125. Glu-127 (proton donor) is an active-site residue. A (2E)-4-hydroxy-3-methylbut-2-enyl diphosphate-binding site is contributed by Thr-168. [4Fe-4S] cluster is bound at residue Cys-229. (2E)-4-hydroxy-3-methylbut-2-enyl diphosphate contacts are provided by Ser-257, Ser-258, Asn-259, and Ser-306. Dimethylallyl diphosphate is bound by residues Ser-257, Ser-258, Asn-259, and Ser-306. Residues Ser-257, Ser-258, Asn-259, and Ser-306 each contribute to the isopentenyl diphosphate site.

It belongs to the IspH family. Requires [4Fe-4S] cluster as cofactor.

The enzyme catalyses isopentenyl diphosphate + 2 oxidized [2Fe-2S]-[ferredoxin] + H2O = (2E)-4-hydroxy-3-methylbut-2-enyl diphosphate + 2 reduced [2Fe-2S]-[ferredoxin] + 2 H(+). It catalyses the reaction dimethylallyl diphosphate + 2 oxidized [2Fe-2S]-[ferredoxin] + H2O = (2E)-4-hydroxy-3-methylbut-2-enyl diphosphate + 2 reduced [2Fe-2S]-[ferredoxin] + 2 H(+). It participates in isoprenoid biosynthesis; dimethylallyl diphosphate biosynthesis; dimethylallyl diphosphate from (2E)-4-hydroxy-3-methylbutenyl diphosphate: step 1/1. It functions in the pathway isoprenoid biosynthesis; isopentenyl diphosphate biosynthesis via DXP pathway; isopentenyl diphosphate from 1-deoxy-D-xylulose 5-phosphate: step 6/6. In terms of biological role, catalyzes the conversion of 1-hydroxy-2-methyl-2-(E)-butenyl 4-diphosphate (HMBPP) into a mixture of isopentenyl diphosphate (IPP) and dimethylallyl diphosphate (DMAPP). Acts in the terminal step of the DOXP/MEP pathway for isoprenoid precursor biosynthesis. In Chlorobaculum tepidum (strain ATCC 49652 / DSM 12025 / NBRC 103806 / TLS) (Chlorobium tepidum), this protein is 4-hydroxy-3-methylbut-2-enyl diphosphate reductase.